We begin with the raw amino-acid sequence, 466 residues long: ATP synthase subunit beta (466 aa).

156–163 (GGAGVGKT) lines the ATP pocket.

It belongs to the ATPase alpha/beta chains family. In terms of assembly, F-type ATPases have 2 components, CF(1) - the catalytic core - and CF(0) - the membrane proton channel. CF(1) has five subunits: alpha(3), beta(3), gamma(1), delta(1), epsilon(1). CF(0) has three main subunits: a(1), b(2) and c(9-12). The alpha and beta chains form an alternating ring which encloses part of the gamma chain. CF(1) is attached to CF(0) by a central stalk formed by the gamma and epsilon chains, while a peripheral stalk is formed by the delta and b chains.

Its subcellular location is the cell membrane. The enzyme catalyses ATP + H2O + 4 H(+)(in) = ADP + phosphate + 5 H(+)(out). In terms of biological role, produces ATP from ADP in the presence of a proton gradient across the membrane. The catalytic sites are hosted primarily by the beta subunits. In Buchnera aphidicola subsp. Schizaphis graminum (strain Sg), this protein is ATP synthase subunit beta.